A 94-amino-acid chain; its full sequence is Integration host factor subunit beta (94 aa).

Belongs to the bacterial histone-like protein family. Heterodimer of an alpha and a beta chain.

This protein is one of the two subunits of integration host factor, a specific DNA-binding protein that functions in genetic recombination as well as in transcriptional and translational control. In Xanthobacter autotrophicus (strain ATCC BAA-1158 / Py2), this protein is Integration host factor subunit beta.